Consider the following 81-residue polypeptide: Neuronatin (81 aa).

This sequence belongs to the neuronatin family.

Functionally, may participate in the maintenance of segment identity in the hindbrain and pituitary development, and maturation or maintenance of the overall structure of the nervous system. May function as a regulatory subunit of ion channels. The chain is Neuronatin (NNAT) from Mesocricetus auratus (Golden hamster).